Consider the following 415-residue polypeptide: Stimulator of interferon genes protein (415 aa).

The 135-residue stretch at 29-163 (HVYHAFISYC…DIIQAISKPE (135 aa)) folds into the TIR domain. Residue Glu-104 is part of the active site. Residue Arg-256 participates in 2',3'-cGAMP binding. The interval 387 to 415 (KSPSSTNMVKSEPNIYREESGKTKSVERG) is disordered. The segment covering 401–415 (IYREESGKTKSVERG) has biased composition (basic and acidic residues).

In the N-terminal section; belongs to the Toll-like receptor family. It in the C-terminal section; belongs to the TMEM173 family. Homodimer.

The enzyme catalyses NAD(+) + H2O = ADP-D-ribose + nicotinamide + H(+). Functionally, sensor of cytosolic DNA from bacteria and viruses that promotes autophagy. Binds c-di-AMP, 2'3'-cGAMP, 3'3'-cGAMP and to a lesser extent c-di-GMP. Nucleotide binding has not been seen to stimulate NAD(+) hydrolase activity. The sequence is that of Stimulator of interferon genes protein from Magallana gigas (Pacific oyster).